Here is a 310-residue protein sequence, read N- to C-terminus: 4-hydroxy-3-methylbut-2-enyl diphosphate reductase (310 aa).

Cysteine 12 provides a ligand contact to [4Fe-4S] cluster. Positions 41 and 74 each coordinate (2E)-4-hydroxy-3-methylbut-2-enyl diphosphate. 2 residues coordinate dimethylallyl diphosphate: histidine 41 and histidine 74. Positions 41 and 74 each coordinate isopentenyl diphosphate. Cysteine 96 is a [4Fe-4S] cluster binding site. Histidine 124 is a binding site for (2E)-4-hydroxy-3-methylbut-2-enyl diphosphate. Histidine 124 contributes to the dimethylallyl diphosphate binding site. Position 124 (histidine 124) interacts with isopentenyl diphosphate. Residue glutamate 126 is the Proton donor of the active site. Threonine 167 is a binding site for (2E)-4-hydroxy-3-methylbut-2-enyl diphosphate. [4Fe-4S] cluster is bound at residue cysteine 197. Serine 225, serine 226, asparagine 227, and serine 269 together coordinate (2E)-4-hydroxy-3-methylbut-2-enyl diphosphate. Dimethylallyl diphosphate-binding residues include serine 225, serine 226, asparagine 227, and serine 269. The isopentenyl diphosphate site is built by serine 225, serine 226, asparagine 227, and serine 269.

This sequence belongs to the IspH family. It depends on [4Fe-4S] cluster as a cofactor.

It carries out the reaction isopentenyl diphosphate + 2 oxidized [2Fe-2S]-[ferredoxin] + H2O = (2E)-4-hydroxy-3-methylbut-2-enyl diphosphate + 2 reduced [2Fe-2S]-[ferredoxin] + 2 H(+). The enzyme catalyses dimethylallyl diphosphate + 2 oxidized [2Fe-2S]-[ferredoxin] + H2O = (2E)-4-hydroxy-3-methylbut-2-enyl diphosphate + 2 reduced [2Fe-2S]-[ferredoxin] + 2 H(+). Its pathway is isoprenoid biosynthesis; dimethylallyl diphosphate biosynthesis; dimethylallyl diphosphate from (2E)-4-hydroxy-3-methylbutenyl diphosphate: step 1/1. It functions in the pathway isoprenoid biosynthesis; isopentenyl diphosphate biosynthesis via DXP pathway; isopentenyl diphosphate from 1-deoxy-D-xylulose 5-phosphate: step 6/6. Catalyzes the conversion of 1-hydroxy-2-methyl-2-(E)-butenyl 4-diphosphate (HMBPP) into a mixture of isopentenyl diphosphate (IPP) and dimethylallyl diphosphate (DMAPP). Acts in the terminal step of the DOXP/MEP pathway for isoprenoid precursor biosynthesis. This Tolumonas auensis (strain DSM 9187 / NBRC 110442 / TA 4) protein is 4-hydroxy-3-methylbut-2-enyl diphosphate reductase.